The following is a 586-amino-acid chain: Major facilitator superfamily domain-containing protein 6-like (586 aa).

Transmembrane regions (helical) follow at residues T50–A70 and A78–P98. A disordered region spans residues A133–S160. 9 helical membrane-spanning segments follow: residues F246 to V266, L287 to G307, G326 to C346, I361 to I381, E400 to F420, L433 to W455, S456 to G476, F499 to S519, and A521 to I541.

It belongs to the major facilitator superfamily. MFSD6 family.

The protein resides in the membrane. This Homo sapiens (Human) protein is Major facilitator superfamily domain-containing protein 6-like (MFSD6L).